Here is a 565-residue protein sequence, read N- to C-terminus: Periplasmic trehalase (565 aa).

The N-terminal stretch at Met1–Ala30 is a signal peptide. Substrate is bound by residues Arg152, Trp159 to Asp160, Asn196, Arg205 to Gln207, Arg277 to Glu279, and Gly310. Active-site proton donor/acceptor residues include Asp312 and Glu496. Position 511 (Glu511) interacts with substrate. Residues Cys539–Pro565 form a disordered region.

This sequence belongs to the glycosyl hydrolase 37 family. Monomer.

Its subcellular location is the periplasm. It carries out the reaction alpha,alpha-trehalose + H2O = alpha-D-glucose + beta-D-glucose. Its function is as follows. Provides the cells with the ability to utilize trehalose at high osmolarity by splitting it into glucose molecules that can subsequently be taken up by the phosphotransferase-mediated uptake system. The polypeptide is Periplasmic trehalase (Escherichia coli O45:K1 (strain S88 / ExPEC)).